The primary structure comprises 354 residues: Phospho-N-acetylmuramoyl-pentapeptide-transferase (354 aa).

Transmembrane regions (helical) follow at residues 16–36 (YITV…LYLM), 66–86 (TPTM…LLTV), 88–108 (IHNP…AIGV), 130–150 (FFLQ…YAHL), 168–188 (IFGI…VNLT), 193–213 (GLAT…TYIT), 227–247 (IIGV…LIGF), 257–277 (VFMG…MAII), 282–302 (VLLI…IIQV), and 331–351 (KIIV…LITL).

It belongs to the glycosyltransferase 4 family. MraY subfamily. The cofactor is Mg(2+).

Its subcellular location is the cell inner membrane. It catalyses the reaction UDP-N-acetyl-alpha-D-muramoyl-L-alanyl-gamma-D-glutamyl-meso-2,6-diaminopimeloyl-D-alanyl-D-alanine + di-trans,octa-cis-undecaprenyl phosphate = di-trans,octa-cis-undecaprenyl diphospho-N-acetyl-alpha-D-muramoyl-L-alanyl-D-glutamyl-meso-2,6-diaminopimeloyl-D-alanyl-D-alanine + UMP. It participates in cell wall biogenesis; peptidoglycan biosynthesis. In terms of biological role, catalyzes the initial step of the lipid cycle reactions in the biosynthesis of the cell wall peptidoglycan: transfers peptidoglycan precursor phospho-MurNAc-pentapeptide from UDP-MurNAc-pentapeptide onto the lipid carrier undecaprenyl phosphate, yielding undecaprenyl-pyrophosphoryl-MurNAc-pentapeptide, known as lipid I. The sequence is that of Phospho-N-acetylmuramoyl-pentapeptide-transferase from Nitratiruptor sp. (strain SB155-2).